The following is a 58-amino-acid chain: U11-ctenitoxin-Pn1b (58 aa).

Intrachain disulfides connect Cys-2–Cys-16, Cys-9–Cys-22, Cys-15–Cys-40, Cys-24–Cys-38, and Cys-48–Cys-55.

In terms of tissue distribution, expressed by the venom gland.

Its subcellular location is the secreted. Functionally, non-toxic to mice. The sequence is that of U11-ctenitoxin-Pn1b from Phoneutria nigriventer (Brazilian armed spider).